We begin with the raw amino-acid sequence, 505 residues long: SusD-like protein P2 (505 aa).

A signal peptide spans Met-1–Gly-17. The N-palmitoyl cysteine moiety is linked to residue Cys-18. The S-diacylglycerol cysteine moiety is linked to residue Cys-18.

It belongs to the SusD family.

Its subcellular location is the cell outer membrane. Its function is as follows. Polysaccharide-binding protein probably involved in ulvan degradation. Ulvan is the main polysaccharide component of the Ulvales (green seaweed) cell wall. It is composed of disaccharide building blocks comprising 3-sulfated rhamnose (Rha3S) linked to D-glucuronic acid (GlcA), L-iduronic acid (IduA), or D-xylose (Xyl). The SusD-like protein may mediate ulvan oligomer-binding before transport in the periplasm for further degradation. The protein is SusD-like protein P2 of Formosa agariphila (strain DSM 15362 / KCTC 12365 / LMG 23005 / KMM 3901 / M-2Alg 35-1).